The sequence spans 878 residues: AP-2 complex subunit alpha (878 aa).

This sequence belongs to the adaptor complexes large subunit family. In terms of assembly, adaptor protein complex 2 (AP-2) is a heterotetramer composed of two large adaptins (alpha-type subunit apl3 and beta-type subunit apl1), a medium chain (mu-type subunit apm4) and a small adaptin (sigma-type subunit aps2).

The protein resides in the cell membrane. The protein localises to the membrane. It localises to the coated pit. Adaptins are components of the adaptor complexes which link clathrin to receptors in coated vesicles. Clathrin-associated protein complexes are believed to interact with the cytoplasmic tails of membrane proteins, leading to their selection and concentration. Alpha adaptin is a subunit of the plasma membrane adaptor. The chain is AP-2 complex subunit alpha (apl3) from Schizosaccharomyces pombe (strain 972 / ATCC 24843) (Fission yeast).